The sequence spans 78 residues: Delta-conotoxin TxVIA (78 aa).

The N-terminal stretch at 1–22 (MKLTCMMIVAVLFLTAWTFATA) is a signal peptide. A propeptide spanning residues 23-49 (DDPRNGLGNLFSNAHHEMKNPEASKLN) is cleaved from the precursor. 3 disulfide bridges follow: Cys-53/Cys-68, Cys-60/Cys-72, and Cys-67/Cys-77. At Met-59 the chain carries Methionine sulfoxide; partial.

Belongs to the conotoxin O1 superfamily. Expressed by the venom duct.

The protein resides in the secreted. Its function is as follows. Delta-conotoxins bind to site 6 of voltage-gated sodium channels (Nav) and inhibit the inactivation process. Binding of this toxin is strongly calcium-dependent but not voltage-dependent. The binding site is most likely on the extracellular side of the sodium channel. Binds receptor sites on both mollusk and rat central nervous system, but despite its high affinity binding to rat sodium channel, it has no functional effect in vivo and in vitro on it. Also has no effect on Gambusia fish. Is important in mollusk for the paralysis of the prey. Upon injection of the peptide, a subordinate lobster assumes an exaggerated dominant posture (of a 'King-Kong' lobster!). The chain is Delta-conotoxin TxVIA from Conus textile (Cloth-of-gold cone).